The chain runs to 640 residues: Probable inactive receptor kinase At3g08680 (640 aa).

Residues 1 to 22 (MMKIIAAFLFLLVTTFVSRCLS) form the signal peptide. LRR repeat units follow at residues 93-115 (ALRI…ILSL), 117-138 (FIRS…VLSH), 139-162 (RLVN…QNLT), 163-185 (QLTD…PPRL), and 186-206 (KYLN…VKSF). The segment at 222–249 (LTPCPENTTAPSPSPTTPTEGPGTTNIG) is disordered. Residues 226–247 (PENTTAPSPSPTTPTEGPGTTN) show a composition bias toward low complexity. The chain crosses the membrane as a helical span at residues 260 to 280 (GAIVGIAVGGSVLLFIILAII). The disordered stretch occupies residues 289-315 (DGGQDSTAVPKAKPGRSDNKAEEFGSG). In terms of domain architecture, Protein kinase spans 341–614 (RASAEVLGKG…EEVVNMMEEI (274 aa)). S343 carries the post-translational modification Phosphoserine. 347–355 (LGKGSYGTT) is an ATP binding site. At T364 the chain carries Phosphothreonine. K369 provides a ligand contact to ATP. 3 positions are modified to phosphothreonine: T441, T514, and T564. The tract at residues 612–640 (EEIRPSGSGPGSGNRASSPEMIRSSDSPV) is disordered.

This sequence belongs to the protein kinase superfamily. Tyr protein kinase family.

The protein localises to the membrane. This chain is Probable inactive receptor kinase At3g08680, found in Arabidopsis thaliana (Mouse-ear cress).